Reading from the N-terminus, the 79-residue chain is MISKELLARINELAHKAKAEGLTELEEAERQELRQKYLKEFRAGFRQQVEMLQVYDKDGKEVTPEKVRQVQRDRGLRDD.

Belongs to the UPF0291 family.

The protein resides in the cytoplasm. The polypeptide is UPF0291 protein lp_2062 (Lactiplantibacillus plantarum (strain ATCC BAA-793 / NCIMB 8826 / WCFS1) (Lactobacillus plantarum)).